The following is a 133-amino-acid chain: Small ribosomal subunit protein uS11 (133 aa).

The protein belongs to the universal ribosomal protein uS11 family. Part of the 30S ribosomal subunit. Interacts with proteins S7 and S18. Binds to IF-3.

In terms of biological role, located on the platform of the 30S subunit, it bridges several disparate RNA helices of the 16S rRNA. Forms part of the Shine-Dalgarno cleft in the 70S ribosome. The chain is Small ribosomal subunit protein uS11 from Bordetella avium (strain 197N).